Reading from the N-terminus, the 458-residue chain is Siroheme synthase (458 aa).

The interval 1-203 is precorrin-2 dehydrogenase /sirohydrochlorin ferrochelatase; it reads MDYLPLFFDL…GNLAAAEQLI (203 aa). Residues 22-23 and 43-44 each bind NAD(+); these read TI and PK. A Phosphoserine modification is found at serine 128. A uroporphyrinogen-III C-methyltransferase region spans residues 216 to 458; the sequence is GEVYLVGAGP…RCHEKLNWYK (243 aa). Proline 225 contributes to the S-adenosyl-L-methionine binding site. Residue aspartate 248 is the Proton acceptor of the active site. Lysine 270 (proton donor) is an active-site residue. Residues 301–303, isoleucine 306, 331–332, methionine 383, and glycine 412 each bind S-adenosyl-L-methionine; these read GGD and TA.

This sequence in the N-terminal section; belongs to the precorrin-2 dehydrogenase / sirohydrochlorin ferrochelatase family. The protein in the C-terminal section; belongs to the precorrin methyltransferase family.

The enzyme catalyses uroporphyrinogen III + 2 S-adenosyl-L-methionine = precorrin-2 + 2 S-adenosyl-L-homocysteine + H(+). It carries out the reaction precorrin-2 + NAD(+) = sirohydrochlorin + NADH + 2 H(+). It catalyses the reaction siroheme + 2 H(+) = sirohydrochlorin + Fe(2+). It participates in cofactor biosynthesis; adenosylcobalamin biosynthesis; precorrin-2 from uroporphyrinogen III: step 1/1. The protein operates within cofactor biosynthesis; adenosylcobalamin biosynthesis; sirohydrochlorin from precorrin-2: step 1/1. It functions in the pathway porphyrin-containing compound metabolism; siroheme biosynthesis; precorrin-2 from uroporphyrinogen III: step 1/1. Its pathway is porphyrin-containing compound metabolism; siroheme biosynthesis; siroheme from sirohydrochlorin: step 1/1. It participates in porphyrin-containing compound metabolism; siroheme biosynthesis; sirohydrochlorin from precorrin-2: step 1/1. Its function is as follows. Multifunctional enzyme that catalyzes the SAM-dependent methylations of uroporphyrinogen III at position C-2 and C-7 to form precorrin-2 via precorrin-1. Then it catalyzes the NAD-dependent ring dehydrogenation of precorrin-2 to yield sirohydrochlorin. Finally, it catalyzes the ferrochelation of sirohydrochlorin to yield siroheme. In Saccharophagus degradans (strain 2-40 / ATCC 43961 / DSM 17024), this protein is Siroheme synthase.